Consider the following 185-residue polypeptide: Large ribosomal subunit protein bL25 (185 aa).

It belongs to the bacterial ribosomal protein bL25 family. CTC subfamily. As to quaternary structure, part of the 50S ribosomal subunit; part of the 5S rRNA/L5/L18/L25 subcomplex. Contacts the 5S rRNA. Binds to the 5S rRNA independently of L5 and L18.

Its function is as follows. This is one of the proteins that binds to the 5S RNA in the ribosome where it forms part of the central protuberance. This chain is Large ribosomal subunit protein bL25, found in Chlamydia trachomatis serovar A (strain ATCC VR-571B / DSM 19440 / HAR-13).